The following is a 307-amino-acid chain: Probable transposase for transposon Tn903 (307 aa).

Required for transposition of transposon Tn903. The protein is Probable transposase for transposon Tn903 of Escherichia coli.